The primary structure comprises 200 residues: NADH-quinone oxidoreductase subunit I 1 (200 aa).

4Fe-4S ferredoxin-type domains are found at residues 52–82 (LNRH…VEGA) and 98–127 (RVYQ…MTNE). Positions 62, 65, 68, 72, 107, 110, 113, and 117 each coordinate [4Fe-4S] cluster. Positions 181-200 (TERQVAVSKGEKPQDEGVEA) are disordered. A compositionally biased stretch (basic and acidic residues) spans 189–200 (KGEKPQDEGVEA).

It belongs to the complex I 23 kDa subunit family. As to quaternary structure, NDH-1 is composed of 14 different subunits. Subunits NuoA, H, J, K, L, M, N constitute the membrane sector of the complex. [4Fe-4S] cluster serves as cofactor.

The protein resides in the cell membrane. The enzyme catalyses a quinone + NADH + 5 H(+)(in) = a quinol + NAD(+) + 4 H(+)(out). Functionally, NDH-1 shuttles electrons from NADH, via FMN and iron-sulfur (Fe-S) centers, to quinones in the respiratory chain. The immediate electron acceptor for the enzyme in this species is believed to be ubiquinone. Couples the redox reaction to proton translocation (for every two electrons transferred, four hydrogen ions are translocated across the cytoplasmic membrane), and thus conserves the redox energy in a proton gradient. The sequence is that of NADH-quinone oxidoreductase subunit I 1 from Streptomyces avermitilis (strain ATCC 31267 / DSM 46492 / JCM 5070 / NBRC 14893 / NCIMB 12804 / NRRL 8165 / MA-4680).